The following is a 727-amino-acid chain: Translation initiation factor IF-2, mitochondrial (727 aa).

Residues 1 to 29 (MNQKLLKLENLLRFHTICRQVHSPSQRRL) constitute a mitochondrion transit peptide. In terms of domain architecture, tr-type G spans 178-346 (PRSPVVTVMG…ATIALAEILE (169 aa)). Residues 187–194 (GHVDHGKT) form a G1 region. 187–194 (GHVDHGKT) lines the GTP pocket. A G2 region spans residues 212 to 216 (GITQH). Residues 234–237 (DTPG) and 288–291 (NKCD) each bind GTP. The G3 stretch occupies residues 234–237 (DTPG). Positions 288–291 (NKCD) are G4. The tract at residues 324–326 (SAL) is G5. Position 688 is a phosphothreonine (Thr-688).

This sequence belongs to the TRAFAC class translation factor GTPase superfamily. Classic translation factor GTPase family. IF-2 subfamily. Monomer.

The protein resides in the mitochondrion. Its function is as follows. One of the essential components for the initiation of protein synthesis. Protects formylmethionyl-tRNA from spontaneous hydrolysis and promotes its binding to the 30S ribosomal subunits. Also involved in the hydrolysis of GTP during the formation of the 70S ribosomal complex. In Mus musculus (Mouse), this protein is Translation initiation factor IF-2, mitochondrial (Mtif2).